Reading from the N-terminus, the 358-residue chain is 7,8-didemethyl-8-hydroxy-5-deazariboflavin synthase (358 aa).

A Radical SAM core domain is found at 35–275 (ITYSKNVFIP…DDISIQIPPN (241 aa)). 3 residues coordinate [4Fe-4S] cluster: C49, C53, and C56.

This sequence belongs to the radical SAM superfamily. CofG family. In terms of assembly, consists of two subunits, CofG and CofH. Requires [4Fe-4S] cluster as cofactor.

It carries out the reaction 5-amino-5-(4-hydroxybenzyl)-6-(D-ribitylimino)-5,6-dihydrouracil + S-adenosyl-L-methionine = 7,8-didemethyl-8-hydroxy-5-deazariboflavin + 5'-deoxyadenosine + L-methionine + NH4(+) + H(+). Its pathway is cofactor biosynthesis; coenzyme F0 biosynthesis. Functionally, catalyzes the radical-mediated synthesis of 7,8-didemethyl-8-hydroxy-5-deazariboflavin (FO) from 5-amino-5-(4-hydroxybenzyl)-6-(D-ribitylimino)-5,6-dihydrouracil. In Methanocaldococcus jannaschii (strain ATCC 43067 / DSM 2661 / JAL-1 / JCM 10045 / NBRC 100440) (Methanococcus jannaschii), this protein is 7,8-didemethyl-8-hydroxy-5-deazariboflavin synthase (cofG).